Reading from the N-terminus, the 499-residue chain is Interleukin-17 receptor B (499 aa).

Positions 1-17 (MLLVLLILAASCRSALP) are cleaved as a signal peptide. The Extracellular portion of the chain corresponds to 18–286 (REPTIQCGSE…PDDNRRMLGG (269 aa)). N-linked (GlcNAc...) asparagine glycans are attached at residues asparagine 67, asparagine 103, asparagine 156, and asparagine 197. The helical transmembrane segment at 287-307 (WLPLFLVLLVAVWVLAAGIYL) threads the bilayer. The Cytoplasmic segment spans residues 308–499 (TWRQGRSTKT…QACHDSCSPL (192 aa)). An SEFIR domain is found at 328–474 (LIKVLVVYPS…LMKDATAFHT (147 aa)).

As to quaternary structure, interacts with DAZAP2. Interacts with TRAF3IP2. Liver and testis. Expressed at lower level in kidney and lung. Expressed in selected T-cell, B-cell and myeloid cell lines.

The protein resides in the cell membrane. The protein localises to the secreted. Receptor for the pro-inflammatory cytokines IL17B and IL17E. May play a role in controlling the growth and/or differentiation of hematopoietic cells. This is Interleukin-17 receptor B (Il17rb) from Mus musculus (Mouse).